A 275-amino-acid polypeptide reads, in one-letter code: Notch homolog 2 N-terminal-like protein B (275 aa).

An N-terminal signal peptide occupies residues 1–25; it reads MPALRPALLWALLALWLCCATPAHA. 4 EGF-like domains span residues 26-63, 64-102, 105-143, and 144-180; these read LQCR…EYCQ, HRDP…EDCQ, TSHP…KECQ, and WTDA…QKCE. 17 cysteine pairs are disulfide-bonded: Cys28-Cys41, Cys35-Cys51, Cys53-Cys62, Cys68-Cys79, Cys73-Cys90, Cys92-Cys101, Cys109-Cys121, Cys115-Cys131, Cys133-Cys142, Cys148-Cys159, Cys153-Cys168, Cys170-Cys179, Cys186-Cys198, Cys192-Cys207, Cys209-Cys218, Cys225-Cys236, and Cys230-Cys246. The N-linked (GlcNAc...) asparagine glycan is linked to Asn46. N-linked (GlcNAc...) asparagine glycosylation is present at Asn155. The EGF-like 5; calcium-binding domain maps to 182–219; it reads DVNECDIPGHCQHGGICLNLPGSYQCQCLQGFTGQYCD. The EGF-like 6 domain occupies 221-258; the sequence is LYVPCAPSPCVNGGTCRQTGDFTFECNCLPETVRRGTE.

The protein belongs to the NOTCH family. As to quaternary structure, interacts with NOTCH2. Interacts with DLL1; the interaction is direct. Expressed in radial glia neural stem cells during cortical development.

The protein resides in the secreted. In terms of biological role, human-specific protein that promotes neural progenitor proliferation and evolutionary expansion of the brain neocortex by regulating the Notch signaling pathway. Able to promote neural progenitor self-renewal, possibly by down-regulating neuronal differentiation genes, thereby delaying the differentiation of neuronal progenitors and leading to an overall final increase in neuronal production. Acts by enhancing the Notch signaling pathway via two different mechanisms that probably work in parallel to reach the same effect. Enhances Notch signaling pathway in a non-cell-autonomous manner via direct interaction with NOTCH2. Also promotes Notch signaling pathway in a cell-autonomous manner through inhibition of cis DLL1-NOTCH2 interactions, which promotes neuronal differentiation. The chain is Notch homolog 2 N-terminal-like protein B from Homo sapiens (Human).